The primary structure comprises 758 residues: 5-methyltetrahydropteroyltriglutamate--homocysteine methyltransferase (758 aa).

5-methyltetrahydropteroyltri-L-glutamate-binding positions include 17 to 20 and Lys-117; that span reads RELK. L-homocysteine is bound by residues 434–436 and Glu-487; that span reads IGS. Residues 434–436 and Glu-487 each bind L-methionine; that span reads IGS. 5-methyltetrahydropteroyltri-L-glutamate contacts are provided by residues 518 to 519 and Trp-564; that span reads RC. L-homocysteine is bound at residue Asp-602. Asp-602 serves as a coordination point for L-methionine. Residue Glu-608 coordinates 5-methyltetrahydropteroyltri-L-glutamate. 3 residues coordinate Zn(2+): His-644, Cys-646, and Glu-668. The active-site Proton donor is His-697. Cys-729 serves as a coordination point for Zn(2+).

The protein belongs to the vitamin-B12 independent methionine synthase family. Zn(2+) is required as a cofactor.

The enzyme catalyses 5-methyltetrahydropteroyltri-L-glutamate + L-homocysteine = tetrahydropteroyltri-L-glutamate + L-methionine. The protein operates within amino-acid biosynthesis; L-methionine biosynthesis via de novo pathway; L-methionine from L-homocysteine (MetE route): step 1/1. Catalyzes the transfer of a methyl group from 5-methyltetrahydrofolate to homocysteine resulting in methionine formation. This Yersinia enterocolitica serotype O:8 / biotype 1B (strain NCTC 13174 / 8081) protein is 5-methyltetrahydropteroyltriglutamate--homocysteine methyltransferase.